A 360-amino-acid polypeptide reads, in one-letter code: UDP-N-acetylglucosamine--N-acetylmuramyl-(pentapeptide) pyrophosphoryl-undecaprenol N-acetylglucosamine transferase (360 aa).

UDP-N-acetyl-alpha-D-glucosamine is bound by residues 12–14, Ser-198, and Gln-289; that span reads TAG.

It belongs to the glycosyltransferase 28 family. MurG subfamily.

The protein resides in the cell membrane. It carries out the reaction Mur2Ac(oyl-L-Ala-gamma-D-Glu-L-Lys-D-Ala-D-Ala)-di-trans,octa-cis-undecaprenyl diphosphate + UDP-N-acetyl-alpha-D-glucosamine = beta-D-GlcNAc-(1-&gt;4)-Mur2Ac(oyl-L-Ala-gamma-D-Glu-L-Lys-D-Ala-D-Ala)-di-trans,octa-cis-undecaprenyl diphosphate + UDP + H(+). It functions in the pathway cell wall biogenesis; peptidoglycan biosynthesis. Its function is as follows. Cell wall formation. Catalyzes the transfer of a GlcNAc subunit on undecaprenyl-pyrophosphoryl-MurNAc-pentapeptide (lipid intermediate I) to form undecaprenyl-pyrophosphoryl-MurNAc-(pentapeptide)GlcNAc (lipid intermediate II). The sequence is that of UDP-N-acetylglucosamine--N-acetylmuramyl-(pentapeptide) pyrophosphoryl-undecaprenol N-acetylglucosamine transferase from Streptococcus equi subsp. zooepidemicus (strain H70).